A 99-amino-acid polypeptide reads, in one-letter code: MAAQTFALRLLLVGTLLGTLLGQGCCQHWSYGLSPGGKRELDGLSETLGNQIVGSFPHVATPCRVLGCAEESPFPKIYRMKGFLDAVTDRENGNRTYKK.

The signal sequence occupies residues 1 to 26 (MAAQTFALRLLLVGTLLGTLLGQGCC). Residue Gln27 is modified to Pyrrolidone carboxylic acid. Gly36 bears the Glycine amide mark.

It belongs to the GnRH family.

The protein resides in the secreted. Functionally, stimulates the secretion of gonadotropins. This chain is Progonadoliberin-1 (gnrh1), found in Dicentrarchus labrax (European seabass).